Reading from the N-terminus, the 92-residue chain is MNKQELIDAVAAQTGASKAQTGETLDTLLEVIKKAVSKGDSVQLIGFGSFGSGKRAARTGRNPKTGETIKIPAAKTVKFTAGKAFKDAVNKR.

Belongs to the bacterial histone-like protein family. Heterodimer of an alpha and a beta chain.

Its function is as follows. Histone-like DNA-binding protein which is capable of wrapping DNA to stabilize it, and thus to prevent its denaturation under extreme environmental conditions. The chain is DNA-binding protein HU-alpha (hupA) from Burkholderia pseudomallei (strain K96243).